We begin with the raw amino-acid sequence, 108 residues long: MAPKKAQAPPPSSKPAKSGGGKQKKKKWSKGKQKEKVNNMVLFDKSTYDKLLSEAPKYKLITPSVLSDRLRISGSLARKAIRDLMARGSIRMVSAHASQQIYTRATNT.

Residues 1–36 (MAPKKAQAPPPSSKPAKSGGGKQKKKKWSKGKQKEK) form a disordered region. The span at 22 to 31 (KQKKKKWSKG) shows a compositional bias: basic residues.

Belongs to the eukaryotic ribosomal protein eS25 family.

This Solanum lycopersicum (Tomato) protein is Small ribosomal subunit protein eS25 (RPS25).